The sequence spans 340 residues: Glycerol-3-phosphate dehydrogenase [NAD(P)+] (340 aa).

Residues S11, W12, R33, and K106 each coordinate NADPH. Residues K106, G137, and S139 each coordinate sn-glycerol 3-phosphate. An NADPH-binding site is contributed by A141. Positions 192, 245, 255, 256, and 257 each coordinate sn-glycerol 3-phosphate. The active-site Proton acceptor is the K192. R256 serves as a coordination point for NADPH. 2 residues coordinate NADPH: V280 and E282.

The protein belongs to the NAD-dependent glycerol-3-phosphate dehydrogenase family.

It is found in the cytoplasm. It catalyses the reaction sn-glycerol 3-phosphate + NAD(+) = dihydroxyacetone phosphate + NADH + H(+). It carries out the reaction sn-glycerol 3-phosphate + NADP(+) = dihydroxyacetone phosphate + NADPH + H(+). The protein operates within membrane lipid metabolism; glycerophospholipid metabolism. Functionally, catalyzes the reduction of the glycolytic intermediate dihydroxyacetone phosphate (DHAP) to sn-glycerol 3-phosphate (G3P), the key precursor for phospholipid synthesis. This chain is Glycerol-3-phosphate dehydrogenase [NAD(P)+], found in Bacillus cereus (strain ATCC 10987 / NRS 248).